The primary structure comprises 1183 residues: Peroxisomal ATPase PEX6 (1183 aa).

A disordered region spans residues 161 to 205 (ESRGKKTGEPEDGPLANGIDLNGVDDSDSDEDVLSQGDDDDENNV). The span at 183–204 (GVDDSDSDEDVLSQGDDDDENN) shows a compositional bias: acidic residues. The AAA-cassette D1 stretch occupies residues 576–785 (LPNNYISPVH…VERAMTACSE (210 aa)). Residues 878 to 1070 (GILFYGPPGT…CSDAMLKAIT (193 aa)) are AAA-cassette D2. 883 to 890 (GPPGTGKT) contributes to the ATP binding site. The segment at 1160 to 1183 (IMVDGPGTGGEGAFGDDGDEEGLY) is disordered. The segment covering 1173 to 1183 (FGDDGDEEGLY) has biased composition (acidic residues).

The protein belongs to the AAA ATPase family. As to quaternary structure, interacts with PEX1; forming the PEX1-PEX6 AAA ATPase complex, which is composed of a heterohexamer formed by a trimer of PEX1-PEX6 dimers.

Its subcellular location is the cytoplasm. It localises to the cytosol. The protein resides in the peroxisome membrane. The catalysed reaction is ATP + H2O = ADP + phosphate + H(+). Its function is as follows. Component of the PEX1-PEX6 AAA ATPase complex, a protein dislocase complex that mediates the ATP-dependent extraction of the PEX5 receptor from peroxisomal membranes, an essential step for PEX5 recycling. Specifically recognizes PEX5 monoubiquitinated at 'Cys-6', and pulls it out of the peroxisome lumen through the PEX2-PEX10-PEX12 retrotranslocation channel. Extraction by the PEX1-PEX6 AAA ATPase complex is accompanied by unfolding of the TPR repeats and release of bound cargo from PEX5. Regulates autophagy and biogenesis of peroxisomes and Woronin bodies. Plays important roles in mycelial growth and development and stress response. Is also essential for conidiation and fatty acid utilization. Required for nematode predation via trap formation. In Arthrobotrys oligospora (strain ATCC 24927 / CBS 115.81 / DSM 1491) (Nematode-trapping fungus), this protein is Peroxisomal ATPase PEX6.